The following is a 369-amino-acid chain: MCGNPAVGNGTRALILVGGYGTRLRPLTLSTPKPLVEFANKPILLHQLEALVDAGCRQVILAVSYRAEQMEKELKVEAKKLGVELIFSHETEPLGTAGPLALAKTILAASSEPFFVLNSDVICDFPFKQLVQFHCNHGKEGTIVVTKVEEPSKYGVVLYDENGCIKNFIEKPQEFVSNKINAGIYIFNPSVLDRIEVKPTSIEKEVFPEMTQQQELYAMDLTGFWMDIGQPKDFLTGMCLYLSSLRQKQSPKLYTGPGVVGNVLVDPTAKIGEGCRIGPNVTIGPDVVIEDGVCIKRSTILKGAIVRSHSWLDSCIVGWRSTVGRWVRIEGITVLGEDVIVKDELYINGGQVLPHKSIAASVPEPQIIM.

The tract at residues 12–231 (RALILVGGYG…TGFWMDIGQP (220 aa)) is substrate-binding domain. Asp120 contacts GDP-alpha-D-mannose. Asp120 contacts Mg(2+). Lys171 is an active-site residue. Asp227 is a GDP-alpha-D-mannose binding site. Asp227 serves as a coordination point for Mg(2+). The hexapeptide repeat domain stretch occupies residues 254–369 (YTGPGVVGNV…ASVPEPQIIM (116 aa)).

The protein belongs to the transferase hexapeptide repeat family. Component of the GMPPA-GMPPB mannose-1-phosphate guanylyltransferase complex composed of 4 Gmppa subunits and 8 Gmppb subunits; the complex is organized into three layers, a central layer made up of 2 Gmppa dimers sandwiched between two layers each made up of 2 Gmppb dimers. Gmppb catalytic activity is reduced when part of the complex and binding of GDP-alpha-D-Mannose by Gmppa induces allosteric feedback inhibition of Gmppb. Mg(2+) serves as cofactor.

It carries out the reaction alpha-D-mannose 1-phosphate + GTP + H(+) = GDP-alpha-D-mannose + diphosphate. The protein operates within nucleotide-sugar biosynthesis; GDP-alpha-D-mannose biosynthesis; GDP-alpha-D-mannose from alpha-D-mannose 1-phosphate (GTP route): step 1/1. Its activity is regulated as follows. Enzyme activity is reduced by incorporation into the GMPPA-GMPPB mannose-1-phosphate guanylyltransferase complex. Allosterically inhibited, when part of the GMPPA-GMPPB complex, by GDP-alpha-D-mannose binding to Gmppa. Catalytic subunit of the GMPPA-GMPPB mannose-1-phosphate guanylyltransferase complex. Catalyzes the formation of GDP-mannose, an essential precursor of glycan moieties of glycoproteins and glycolipids. Can catalyze the reverse reaction in vitro. Together with GMPPA regulates GDP-alpha-D-mannose levels. The chain is Mannose-1-phosphate guanylyltransferase catalytic subunit beta from Drosophila melanogaster (Fruit fly).